A 216-amino-acid chain; its full sequence is ADP-sugar pyrophosphatase (216 aa).

Met-1 bears the N-acetylmethionine mark. Ser-3 and Ser-10 each carry phosphoserine. Trp-28 contributes to the substrate binding site. Lys-42 participates in a covalent cross-link: Glycyl lysine isopeptide (Lys-Gly) (interchain with G-Cter in SUMO2). Thr-45 bears the Phosphothreonine mark. Substrate-binding positions include 46–47 (WE) and Arg-51. One can recognise a Nudix hydrolase domain in the interval 57–194 (QTADGVAVIP…EEHLTVDARV (138 aa)). Tyr-74 carries the phosphotyrosine modification. Arg-84 lines the substrate pocket. Ala-96 is a Mg(2+) binding site. Residues 97 to 118 (GLIDDGETPEAAALRELEEETG) carry the Nudix box motif. Residue Leu-98 participates in substrate binding. 2 residues coordinate Mg(2+): Glu-112 and Glu-116. Asp-133 is a binding site for substrate. Residue Glu-163 coordinates Mg(2+). N6-acetyllysine occurs at positions 207 and 215.

It belongs to the Nudix hydrolase family. As to quaternary structure, homodimer. Interacts with PARG. Mg(2+) is required as a cofactor. In terms of processing, phosphorylation at Thr-45 is required for homodimer stability; dephosphorylation results in destabilization of the homodimer. Dephosphorylation at Thr-45 promotes the ATP-synthesis activity.

It localises to the nucleus. It catalyses the reaction D-ribose 5-phosphate + ATP + H(+) = ADP-D-ribose + diphosphate. It carries out the reaction ADP-D-ribose + H2O = D-ribose 5-phosphate + AMP + 2 H(+). The catalysed reaction is 8-oxo-dGDP + H2O = 8-oxo-dGMP + phosphate + H(+). Enzyme that can either act as an ADP-sugar pyrophosphatase in absence of diphosphate or catalyze the synthesis of ATP in presence of diphosphate. In absence of diphosphate, hydrolyzes with similar activities various modified nucleoside diphosphates such as ADP-ribose, ADP-mannose, ADP-glucose, 8-oxo-GDP and 8-oxo-dGDP. Can also hydrolyze other nucleotide sugars with low activity. In presence of diphosphate, mediates the synthesis of ATP in the nucleus by catalyzing the conversion of ADP-ribose to ATP and ribose 5-phosphate. Nuclear ATP synthesis takes place when dephosphorylated at Thr-45. Nuclear ATP generation is required for extensive chromatin remodeling events that are energy-consuming. Does not play a role in U8 snoRNA decapping activity. Binds U8 snoRNA. The protein is ADP-sugar pyrophosphatase of Pongo abelii (Sumatran orangutan).